Consider the following 96-residue polypeptide: uncharacterized protein (96 aa).

The next 2 helical transmembrane spans lie at 27–47 and 52–72; these read LYTV…FFFF and MSAG…RPTI.

Its subcellular location is the cell membrane. This is an uncharacterized protein from Bacillus subtilis (strain 168).